Consider the following 345-residue polypeptide: S-adenosylmethionine:tRNA ribosyltransferase-isomerase (345 aa).

It belongs to the QueA family. Monomer.

The protein resides in the cytoplasm. It catalyses the reaction 7-aminomethyl-7-carbaguanosine(34) in tRNA + S-adenosyl-L-methionine = epoxyqueuosine(34) in tRNA + adenine + L-methionine + 2 H(+). It functions in the pathway tRNA modification; tRNA-queuosine biosynthesis. Functionally, transfers and isomerizes the ribose moiety from AdoMet to the 7-aminomethyl group of 7-deazaguanine (preQ1-tRNA) to give epoxyqueuosine (oQ-tRNA). This is S-adenosylmethionine:tRNA ribosyltransferase-isomerase from Azoarcus sp. (strain BH72).